A 347-amino-acid chain; its full sequence is Bifunctional methylenetetrahydrofolate dehydrogenase/cyclohydrolase 2, mitochondrial (347 aa).

Substrate is bound by residues 98-102 and 145-147; these read YVRNK and VQL. Residues 214–216 and arginine 247 contribute to the NAD(+) site; that span reads GRS. Substrate is bound at residue 323–327; it reads PGGVG.

Belongs to the tetrahydrofolate dehydrogenase/cyclohydrolase family. Mg(2+) is required as a cofactor.

It localises to the mitochondrion inner membrane. It carries out the reaction (6R)-5,10-methylene-5,6,7,8-tetrahydrofolate + NAD(+) = (6R)-5,10-methenyltetrahydrofolate + NADH. The enzyme catalyses (6R)-5,10-methenyltetrahydrofolate + H2O = (6R)-10-formyltetrahydrofolate + H(+). It catalyses the reaction (6R)-5,10-methylene-5,6,7,8-tetrahydrofolate + NADP(+) = (6R)-5,10-methenyltetrahydrofolate + NADPH. It participates in one-carbon metabolism; tetrahydrofolate interconversion. Functionally, bifunctional mitochondrial folate-interconverting enzyme that has both NAD/NADP-dependent methylenetetrahydrofolate dehydrogenase and methenyltetrahydrofolate cyclohydrolase activities. The chain is Bifunctional methylenetetrahydrofolate dehydrogenase/cyclohydrolase 2, mitochondrial from Callithrix jacchus (White-tufted-ear marmoset).